A 118-amino-acid polypeptide reads, in one-letter code: Large ribosomal subunit protein bL20 (118 aa).

It belongs to the bacterial ribosomal protein bL20 family.

In terms of biological role, binds directly to 23S ribosomal RNA and is necessary for the in vitro assembly process of the 50S ribosomal subunit. It is not involved in the protein synthesizing functions of that subunit. The protein is Large ribosomal subunit protein bL20 of Lactobacillus johnsonii (strain CNCM I-12250 / La1 / NCC 533).